Here is a 387-residue protein sequence, read N- to C-terminus: Zinc finger transcription factor YY1 (387 aa).

C2H2-type zinc fingers lie at residues 79–103 (FLCS…SHIH), 108–132 (YVCD…YLIH), 138–162 (YICT…MKTH), 168–193 (HICP…AAYH), and 230–255 (YACP…KREH). The MED18-binding stretch occupies residues 201 to 290 (TPKYTPPAEK…DDGSDQDVYR (90 aa)). The interval 258 to 387 (HLQEENADTP…DDDEETEYED (130 aa)) is disordered. At Ser284 the chain carries Phosphoserine. The segment covering 291–305 (KHASNGKGQTHKQQS) has biased composition (basic residues). Positions 319–326 (GKKGSTSS) match the Nuclear localization signal motif. Positions 339–367 (AKETFEEVEREEEEDSEETEEDRDNVEDG) form a coiled coil. 2 stretches are compositionally biased toward acidic residues: residues 344-363 (EEVE…DRDN) and 373-387 (NNED…EYED).

As to quaternary structure, interacts with MED18 to suppress disease susceptibility via the repression of genes glutaredoxins GRX480, GRXS13 and thioredoxin TRX-h5. In terms of tissue distribution, mostly expressed in flowers, to a lower extent in seedlings, stems and leaves, and, at low levels, in roots and senescent leaves.

It localises to the nucleus. In terms of biological role, dual-function transcription factor with both repression and activation activities. Binds to 5'-CCATATT-3' motif in target gene promoters (e.g. ABR1). Also binds to G-rich DNA motif 5'-GGGGGCAGTGG-3'. Regulates the expression of genes involved in diverse cellular pathways, including glucose metabolism, photosynthesis, phototropism and stress response (e.g. salt, drought and osmotic stress). Regulates plant immunity, especially during necrotrophic fungal infection (e.g. B.cinerea). Binds to ABR1 promoter and promotes its expression, thus negatively regulating the abscisic acid (ABA) signaling pathway. Represses ABA- and salt-responsive genes expression. This is Zinc finger transcription factor YY1 from Arabidopsis thaliana (Mouse-ear cress).